The sequence spans 355 residues: Guanine nucleotide-binding protein alpha-12 subunit (355 aa).

The region spanning Arg28–Gln355 is the G-alpha domain. A G1 motif region spans residues Asn31 to Thr44. Residues Gly36–Ser43, Leu176–Thr182, Asp201–Gln205, Asn270–Asp273, and Ala327 contribute to the GTP site. Positions 43 and 182 each coordinate Mg(2+). Positions Asp174–Thr182 are G2 motif. A G3 motif region spans residues Phe197–Arg206. The interval Ile266–Asp273 is G4 motif. Positions Thr325–Thr330 are G5 motif.

The protein belongs to the G-alpha family. In terms of assembly, g proteins are composed of 3 units; alpha, beta and gamma. The alpha chain contains the guanine nucleotide binding site.

In terms of biological role, guanine nucleotide-binding proteins (G proteins) are involved as modulators or transducers in various transmembrane signaling systems. May play a role in resistance to fungal infection in the epidermis by regulating the up-regulation of several antimicrobial peptides of the NLP and CNC families. Upstream of plc-3, egl-8, tpa-1 and the p38-like pathway, required for the expression of antimicrobial peptide nlp-29 in the epidermis in response to fungal infection or physical injury. The protein is Guanine nucleotide-binding protein alpha-12 subunit (gpa-12) of Caenorhabditis briggsae.